Here is a 432-residue protein sequence, read N- to C-terminus: Protein ABHD8 (432 aa).

Disordered stretches follow at residues Lys-47–Gln-69 and Pro-121–Arg-149. Positions Ala-52–Leu-61 are enriched in pro residues. Residues Gly-139–Arg-149 are compositionally biased toward basic residues. Positions Val-170–Gly-272 constitute an AB hydrolase-1 domain. Catalysis depends on charge relay system residues Ser-245, Asp-363, and His-391.

Belongs to the AB hydrolase superfamily. Interacts with NLRP3 (via NACHT and LLR domains); this interaction is enhanced in the presence of NLRP3 inflammasome inducers, such as ATP, nigericin, silica, or alum. Interacts with ZDHHC12.

The protein localises to the cytoplasm. Functionally, negatively regulates NLRP3-driven inflammation. Promotes NLRP3 degradation through the chaperone-mediated autophagy (CMA) pathway, hence attenuating inflammasome activation and IL1B secretion. Acts by recruiting palmitoyltransferase ZDHHC12 to NLRP3, facilitating NLRP3 palmitoylation and subsequent degradation. The polypeptide is Protein ABHD8 (Bos taurus (Bovine)).